Here is an 893-residue protein sequence, read N- to C-terminus: Major vault protein (893 aa).

Position 2 is an N-acetylalanine (A2). 9 MVP repeats span residues 2–56, 57–111, 112–164, 165–217, 218–272, 273–323, 324–379, 380–457, and 458–520; these read ATEE…VPPR, HYCT…DITP, LQVV…EIIQ, ATII…DLVD, AVIL…GVVP, ITTL…IQDV, YVLS…ERQA, IPLD…KTRV, and VSYR…LLGP. A Glycyl lysine isopeptide (Lys-Gly) (interchain with G-Cter in SUMO2) cross-link involves residue K444. S445 carries the post-translational modification Phosphoserine. A Glycyl lysine isopeptide (Lys-Gly) (interchain with G-Cter in SUMO2) cross-link involves residue K704. The disordered stretch occupies residues 856-893; sequence QPLGRRVASGPSPGEGISPQSAQAPQAPGDNHVVPVLR.

In terms of assembly, the vault ribonucleoprotein particle is a huge (400 A x 670 A) cage structure of 12.9 MDa. It consists of a dimer of half-vaults, with each half-vault comprising 39 identical major vault protein (MVP) chains, PARP4 and one or more vault RNAs (vRNAs). Interacts with TEP1. Interacts with PTEN and activated MAPK1. The phosphorylated protein interacts with the SH2 domains of PTPN11 and SRC. Interacts with APEX1. May interact with ZNF540. In terms of processing, phosphorylated on Tyr residues after EGF stimulation. Post-translationally, dephosphorylated by PTPN11.

Its subcellular location is the cytoplasm. The protein localises to the nucleus. Required for normal vault structure. Vaults are multi-subunit structures that may act as scaffolds for proteins involved in signal transduction. Vaults may also play a role in nucleo-cytoplasmic transport. Down-regulates IFNG-mediated STAT1 signaling and subsequent activation of JAK. Down-regulates SRC activity and signaling through MAP kinases. The polypeptide is Major vault protein (MVP) (Pongo abelii (Sumatran orangutan)).